The following is a 59-amino-acid chain: Eag protein (59 aa).

This Salmonella phage P22 (Bacteriophage P22) protein is Eag protein (eag).